Consider the following 445-residue polypeptide: Tubulin beta chain (445 aa).

GTP-binding residues include glutamine 11, glutamate 69, serine 138, glycine 142, threonine 143, glycine 144, asparagine 205, and asparagine 227. Mg(2+) is bound at residue glutamate 69.

It belongs to the tubulin family. In terms of assembly, dimer of alpha and beta chains. A typical microtubule is a hollow water-filled tube with an outer diameter of 25 nm and an inner diameter of 15 nM. Alpha-beta heterodimers associate head-to-tail to form protofilaments running lengthwise along the microtubule wall with the beta-tubulin subunit facing the microtubule plus end conferring a structural polarity. Microtubules usually have 13 protofilaments but different protofilament numbers can be found in some organisms and specialized cells. It depends on Mg(2+) as a cofactor.

The protein localises to the cytoplasm. It is found in the cytoskeleton. Its function is as follows. Tubulin is the major constituent of microtubules, a cylinder consisting of laterally associated linear protofilaments composed of alpha- and beta-tubulin heterodimers. Microtubules grow by the addition of GTP-tubulin dimers to the microtubule end, where a stabilizing cap forms. Below the cap, tubulin dimers are in GDP-bound state, owing to GTPase activity of alpha-tubulin. This chain is Tubulin beta chain (TUB2), found in Ajellomyces capsulatus (Darling's disease fungus).